The sequence spans 570 residues: Urease subunit alpha (570 aa).

Positions 131–570 (GGIDSHIHFI…LPMTQRYFLF (440 aa)) constitute a Urease domain. Ni(2+)-binding residues include His-136, His-138, and Lys-219. Lys-219 bears the N6-carboxylysine mark. His-221 contacts substrate. Residues His-248 and His-274 each contribute to the Ni(2+) site. The active-site Proton donor is the His-322. Residue Asp-362 coordinates Ni(2+).

This sequence belongs to the metallo-dependent hydrolases superfamily. Urease alpha subunit family. In terms of assembly, heterotrimer of UreA (gamma), UreB (beta) and UreC (alpha) subunits. Three heterotrimers associate to form the active enzyme. Ni cation serves as cofactor. Carboxylation allows a single lysine to coordinate two nickel ions.

Its subcellular location is the cytoplasm. It carries out the reaction urea + 2 H2O + H(+) = hydrogencarbonate + 2 NH4(+). The protein operates within nitrogen metabolism; urea degradation; CO(2) and NH(3) from urea (urease route): step 1/1. The polypeptide is Urease subunit alpha (Trichodesmium erythraeum (strain IMS101)).